The primary structure comprises 361 residues: Phospho-N-acetylmuramoyl-pentapeptide-transferase (361 aa).

Transmembrane regions (helical) follow at residues 27–47 (GALF…ISLL), 72–92 (TPTM…LLWA), 99–119 (VWIT…DDYL), 139–159 (ALIA…GLAY), 169–189 (AIVN…VGAG), 200–220 (GLAI…AYLV), 240–260 (LAVV…FNAP), 264–284 (IFMG…VAVA), 289–309 (IVLA…IIQV), and 338–358 (QVVI…LATL).

It belongs to the glycosyltransferase 4 family. MraY subfamily. Mg(2+) serves as cofactor.

It is found in the cell inner membrane. The enzyme catalyses UDP-N-acetyl-alpha-D-muramoyl-L-alanyl-gamma-D-glutamyl-meso-2,6-diaminopimeloyl-D-alanyl-D-alanine + di-trans,octa-cis-undecaprenyl phosphate = di-trans,octa-cis-undecaprenyl diphospho-N-acetyl-alpha-D-muramoyl-L-alanyl-D-glutamyl-meso-2,6-diaminopimeloyl-D-alanyl-D-alanine + UMP. It participates in cell wall biogenesis; peptidoglycan biosynthesis. Its function is as follows. Catalyzes the initial step of the lipid cycle reactions in the biosynthesis of the cell wall peptidoglycan: transfers peptidoglycan precursor phospho-MurNAc-pentapeptide from UDP-MurNAc-pentapeptide onto the lipid carrier undecaprenyl phosphate, yielding undecaprenyl-pyrophosphoryl-MurNAc-pentapeptide, known as lipid I. This chain is Phospho-N-acetylmuramoyl-pentapeptide-transferase, found in Methylobacterium nodulans (strain LMG 21967 / CNCM I-2342 / ORS 2060).